A 730-amino-acid chain; its full sequence is Wall-associated receptor kinase-like 3 (730 aa).

Residues 1-25 form the signal peptide; the sequence is MKTKTYNFRYIVASVLTLLMNGSSA. The Extracellular portion of the chain corresponds to 26-357; sequence ATPPNSNSSS…AKLAHVLRGV (332 aa). 9 N-linked (GlcNAc...) asparagine glycosylation sites follow: asparagine 32, asparagine 38, asparagine 68, asparagine 90, asparagine 119, asparagine 132, asparagine 212, asparagine 233, and asparagine 269. The atypical EGF-like stretch occupies residues 283-340; that stretch reads CLCRYGYFSRMSYRSCYCGSGYRGNPYIRGGCIDIDECEVPNKCGEDTCVNMAGRYSC. 3 cysteine pairs are disulfide-bonded: cysteine 285-cysteine 298, cysteine 320-cysteine 331, and cysteine 326-cysteine 340. The chain crosses the membrane as a helical span at residues 358-378; it reads LIGLLGLLFFVIGIFGLYKFI. The Cytoplasmic portion of the chain corresponds to 379–730; that stretch reads RKRRRIIRSM…LMEINRIYDS (352 aa). Residues 428–699 enclose the Protein kinase domain; it reads FSIDRVLGQG…REVSIKLERI (272 aa). ATP contacts are provided by residues 434–442 and lysine 456; that span reads LGQGGQGTV. Aspartate 553 (proton acceptor) is an active-site residue. Residues 703–730 are disordered; that stretch reads PKDLDVHTENEEEEEEDQLMEINRIYDS. Acidic residues predominate over residues 712-721; it reads NEEEEEEDQL.

It belongs to the protein kinase superfamily. Ser/Thr protein kinase family. In terms of tissue distribution, preferentially expressed in roots and flowers.

It is found in the membrane. It catalyses the reaction L-seryl-[protein] + ATP = O-phospho-L-seryl-[protein] + ADP + H(+). The catalysed reaction is L-threonyl-[protein] + ATP = O-phospho-L-threonyl-[protein] + ADP + H(+). Serine/threonine-protein kinase that may function as a signaling receptor of extracellular matrix component. This Arabidopsis thaliana (Mouse-ear cress) protein is Wall-associated receptor kinase-like 3 (WAKL3).